The primary structure comprises 113 residues: UPF0482 protein CKO_01577 (113 aa).

An N-terminal signal peptide occupies residues 1–28 (MNNTLSKRLCLTAMLALGAVVYTTSAFA). The disordered stretch occupies residues 44–67 (RQHAAMEKEQWNDTRSLRQKVNTR). Residues 47-59 (AAMEKEQWNDTRS) are compositionally biased toward basic and acidic residues.

This sequence belongs to the UPF0482 family.

The protein is UPF0482 protein CKO_01577 of Citrobacter koseri (strain ATCC BAA-895 / CDC 4225-83 / SGSC4696).